Consider the following 147-residue polypeptide: Nucleoside diphosphate kinase (147 aa).

Residues Lys11, Phe59, Arg87, Thr93, Arg104, and Asn114 each coordinate ATP. Residue His117 is the Pros-phosphohistidine intermediate of the active site.

The protein belongs to the NDK family. As to quaternary structure, homotetramer. Requires Mg(2+) as cofactor.

It localises to the cytoplasm. It carries out the reaction a 2'-deoxyribonucleoside 5'-diphosphate + ATP = a 2'-deoxyribonucleoside 5'-triphosphate + ADP. The enzyme catalyses a ribonucleoside 5'-diphosphate + ATP = a ribonucleoside 5'-triphosphate + ADP. In terms of biological role, major role in the synthesis of nucleoside triphosphates other than ATP. The ATP gamma phosphate is transferred to the NDP beta phosphate via a ping-pong mechanism, using a phosphorylated active-site intermediate. This Anaeromyxobacter dehalogenans (strain 2CP-C) protein is Nucleoside diphosphate kinase.